The following is a 621-amino-acid chain: uncharacterized protein (621 aa).

An N-terminal signal peptide occupies residues 1–15 (MRRSVCYVTPSVARA).

It belongs to the chlamydial CPn_0512/CT_425/TC_0708 family.

This is an uncharacterized protein from Chlamydia trachomatis serovar D (strain ATCC VR-885 / DSM 19411 / UW-3/Cx).